A 218-amino-acid chain; its full sequence is 3-dehydroquinate dehydratase (218 aa).

Residues 29 to 31 (EFR) and Arg56 each bind 3-dehydroquinate. The Proton donor/acceptor role is filled by His116. Lys142 functions as the Schiff-base intermediate with substrate in the catalytic mechanism. 3 residues coordinate 3-dehydroquinate: Arg180, Ser200, and Gln204.

Belongs to the type-I 3-dehydroquinase family. Homodimer.

The enzyme catalyses 3-dehydroquinate = 3-dehydroshikimate + H2O. Its pathway is metabolic intermediate biosynthesis; chorismate biosynthesis; chorismate from D-erythrose 4-phosphate and phosphoenolpyruvate: step 3/7. Its function is as follows. Involved in the third step of the chorismate pathway, which leads to the biosynthesis of aromatic amino acids. Catalyzes the cis-dehydration of 3-dehydroquinate (DHQ) and introduces the first double bond of the aromatic ring to yield 3-dehydroshikimate. This Methanococcus maripaludis (strain C6 / ATCC BAA-1332) protein is 3-dehydroquinate dehydratase.